The chain runs to 161 residues: Phosphohistidine phosphatase SixA (161 aa).

The protein belongs to the SixA phosphatase family.

Functionally, exhibits phosphohistidine phosphatase activity towards the HPt domain of the ArcB sensor involved in the multistep His-Asp phosphorelay. This chain is Phosphohistidine phosphatase SixA (sixA), found in Escherichia coli (strain K12).